Here is a 318-residue protein sequence, read N- to C-terminus: MFLTNISCLIIPILLAVAFLTLVERKILGYMQLRKGPNIVGPYGLLQPIADAIKLFTKEPLRPLTSSKLLFTIAPTLALSLALTLWIPLPMPHPLANLNLGMLFILAMSSLAVYSILWSGWASNSKYALIGALRAVAQTISYEVTLAIILLHSNLFSGSYSLSSLITTQEHIWLIIPSWPLTMMWFISTLAETNRAPFDLTEGESELVSGFNVEYAAGPFALFFLAEYANIMMMNALTTTIFLGPTYNPTFPELYSTNFMLKTTMLTISFLWIRASYPRFRYDQLMHLLWKNFLPLTLALCMWHTSLLISLTSIPPQT.

The next 9 helical transmembrane spans lie at 2-22, 36-56, 69-89, 100-120, 130-152, 171-191, 217-237, 254-273, and 294-314; these read FLTNISCLIIPILLAVAFLTL, GPNIVGPYGLLQPIADAIKLF, LLFTIAPTLALSLALTLWIPL, LGMLFILAMSSLAVYSILWSG, IGALRAVAQTISYEVTLAIILLH, HIWLIIPSWPLTMMWFISTLA, AGPFALFFLAEYANIMMMNAL, LYSTNFMLKTTMLTISFLWI, and LPLTLALCMWHTSLLISLTSI.

Belongs to the complex I subunit 1 family.

It localises to the mitochondrion inner membrane. It catalyses the reaction a ubiquinone + NADH + 5 H(+)(in) = a ubiquinol + NAD(+) + 4 H(+)(out). Functionally, core subunit of the mitochondrial membrane respiratory chain NADH dehydrogenase (Complex I) that is believed to belong to the minimal assembly required for catalysis. Complex I functions in the transfer of electrons from NADH to the respiratory chain. The immediate electron acceptor for the enzyme is believed to be ubiquinone. This Cyclopes didactylus (Silky anteater) protein is NADH-ubiquinone oxidoreductase chain 1 (MT-ND1).